The chain runs to 147 residues: Receptor activity-modifying protein 3 (147 aa).

The first 22 residues, methionine 1–alanine 22, serve as a signal peptide directing secretion. The Extracellular portion of the chain corresponds to glutamine 23–aspartate 112. Asparagine 28, asparagine 57, asparagine 70, and asparagine 102 each carry an N-linked (GlcNAc...) asparagine glycan. Cystine bridges form between cysteine 39–cysteine 71 and cysteine 56–cysteine 103. A helical membrane pass occupies residues proline 113–valine 137. Residues tryptophan 138–leucine 147 are Cytoplasmic-facing.

It belongs to the RAMP family. As to quaternary structure, heterodimer of CALCRL and RAMP3; interaction induces allosteric modulation of CALCRL function and ligand specificity for adrenomedullin/ADM and intermedin/ADM2. Heterodimer of CALCR and RAMP3; interaction form the receptor complex AMYR3 for amylin/IAPP. Interacts with GPER1. Expressed predominantly in the testis, embryonic and adult brain and in kidney.

It localises to the cell membrane. It is found in the membrane. Its function is as follows. Accessory protein that interacts with and modulates the function of G-protein coupled receptors including calcitonin gene-related peptide type 1 receptor (CALCRL), calcitonin receptor (CALCR) and G-protein coupled estrogen receptor 1 (GPER1). Required for the transport of CALCRL and GPER1 receptors to the plasma membrane. Plays a role in cardioprotection by reducing cardiac hypertrophy and perivascular fibrosis in a GPER1-dependent manner. Together with CALCRL, form a receptor complex for adrenomedullin/ADM and intermedin/ADM2. Together with CALCR, act as a receptor complex for amylin/IAPP. This chain is Receptor activity-modifying protein 3, found in Mus musculus (Mouse).